Here is a 255-residue protein sequence, read N- to C-terminus: Probable septum site-determining protein MinC (255 aa).

The segment covering S103–E115 has biased composition (basic and acidic residues). Positions S103–P136 are disordered. Residues V127–P136 show a composition bias toward pro residues.

Belongs to the MinC family. In terms of assembly, interacts with MinD and FtsZ.

Functionally, cell division inhibitor that blocks the formation of polar Z ring septums. Rapidly oscillates between the poles of the cell to destabilize FtsZ filaments that have formed before they mature into polar Z rings. Prevents FtsZ polymerization. The sequence is that of Probable septum site-determining protein MinC from Ralstonia nicotianae (strain ATCC BAA-1114 / GMI1000) (Ralstonia solanacearum).